A 338-amino-acid polypeptide reads, in one-letter code: Deoxyhypusine hydroxylase (338 aa).

5 HEAT-like PBS-type repeats span residues 71-97, 104-130, 200-233, 238-264, and 271-298; these read LKHELAYCLGQTRNPDAVAFLQQVLKD, CRHEAAEALGALGYEDSLEILKALKDD, QRYRAMFALRDLASPPDLPTAVQAVDALAKGLKD, FRHEVAFVFGQLCHPASVPSLTECLSN, and VRHEAAEALGSLGDVEGVEDTLKKFLND. Residues His73, Glu74, His106, and Glu107 each coordinate Fe cation. Residues His240, Glu241, His273, and Glu274 each coordinate Fe cation.

Belongs to the deoxyhypusine hydroxylase family. The cofactor is Fe(2+).

The protein localises to the cytoplasm. It localises to the nucleus. It carries out the reaction [eIF5A protein]-deoxyhypusine + AH2 + O2 = [eIF5A protein]-hypusine + A + H2O. It functions in the pathway protein modification; eIF5A hypusination. Functionally, catalyzes the hydroxylation of the N(6)-(4-aminobutyl)-L-lysine intermediate to form hypusine, an essential post-translational modification only found in mature eIF-5A factor. The chain is Deoxyhypusine hydroxylase (lia1) from Aspergillus niger (strain ATCC MYA-4892 / CBS 513.88 / FGSC A1513).